Consider the following 348-residue polypeptide: MTKENKPRDIVIVGAGVIGLTTAWILSDLGLAPRIKVIAKYTPEDRSVEYTSPWAGANFCSISATDDNALRWDKITYHRFAYLAKTRPEAGIRFADLRELWEYEPKHDKIRSWNTYVRDFKVIPEKDLPGECIYGHKATTFLINAPHYLNYMYKLLIEAGVEFEKKELSHIKETVEETPEASVVFNCTGLWASKLGGVEDPDVYPTRGHVVLVKAPHVTETRILNGKNSDTYIIPRPLNGGVICGGFMQPGNWDREIHPEDTLDILKRTSALMPELFHGKGPEGAEIIQECVGFRPSRKGGARVELDVVPGTSVPLVHDYGASGTGYQAGYGMALDSVMLALPKIKLA.

FAD-binding residues include Ala15, Ile18, Lys40, Ser52, Gly56, and Asn58. Residues Tyr232 and Arg295 each coordinate (R)-lactate. Anthranilate is bound by residues Tyr232 and Arg295. Residues Arg295, Ser323, Gly326, Tyr327, and Gln328 each coordinate FAD.

This sequence belongs to the DAMOX/DASOX family. The cofactor is FAD.

It localises to the peroxisome. The catalysed reaction is a D-alpha-amino acid + O2 + H2O = a 2-oxocarboxylate + H2O2 + NH4(+). It carries out the reaction D-serine + O2 + H2O = 3-hydroxypyruvate + H2O2 + NH4(+). It catalyses the reaction D-alanine + O2 + H2O = pyruvate + H2O2 + NH4(+). The enzyme catalyses D-arginine + O2 + H2O = 5-guanidino-2-oxopentanoate + H2O2 + NH4(+). Functionally, catalyzes the oxidative deamination of D-amino acids with broad substrate specificity. Enables the organism to utilize D-amino acids as a source of nutrients. This is D-amino-acid oxidase from Schizosaccharomyces pombe (strain 972 / ATCC 24843) (Fission yeast).